A 201-amino-acid chain; its full sequence is ATP-dependent Clp protease proteolytic subunit (201 aa).

Serine 101 (nucleophile) is an active-site residue. Histidine 126 is an active-site residue.

The protein belongs to the peptidase S14 family. In terms of assembly, fourteen ClpP subunits assemble into 2 heptameric rings which stack back to back to give a disk-like structure with a central cavity, resembling the structure of eukaryotic proteasomes.

The protein resides in the cytoplasm. The catalysed reaction is Hydrolysis of proteins to small peptides in the presence of ATP and magnesium. alpha-casein is the usual test substrate. In the absence of ATP, only oligopeptides shorter than five residues are hydrolyzed (such as succinyl-Leu-Tyr-|-NHMec, and Leu-Tyr-Leu-|-Tyr-Trp, in which cleavage of the -Tyr-|-Leu- and -Tyr-|-Trp bonds also occurs).. In terms of biological role, cleaves peptides in various proteins in a process that requires ATP hydrolysis. Has a chymotrypsin-like activity. Plays a major role in the degradation of misfolded proteins. The chain is ATP-dependent Clp protease proteolytic subunit from Francisella philomiragia subsp. philomiragia (strain ATCC 25017 / CCUG 19701 / FSC 153 / O#319-036).